The primary structure comprises 101 residues: Small ribosomal subunit protein bS18c (101 aa).

This sequence belongs to the bacterial ribosomal protein bS18 family. As to quaternary structure, part of the 30S ribosomal subunit.

It is found in the plastid. It localises to the chloroplast. This is Small ribosomal subunit protein bS18c from Panax ginseng (Korean ginseng).